A 278-amino-acid polypeptide reads, in one-letter code: Putative transposase for insertion sequence element IS986/IS6110 (278 aa).

In terms of domain architecture, Integrase catalytic spans 101 to 268; that stretch reads GPPAPNRLWV…VPPVELEAAY (168 aa).

Its function is as follows. Involved in the transposition of the insertion sequence. The protein is Putative transposase for insertion sequence element IS986/IS6110 of Mycobacterium bovis (strain ATCC BAA-935 / AF2122/97).